The sequence spans 276 residues: Orotidine 5'-phosphate decarboxylase (276 aa).

Substrate contacts are provided by residues Asp-40, 62 to 64 (KTH), 93 to 102 (DRKFIDIGNT), Tyr-228, and Arg-246. Lys-95 serves as the catalytic Proton donor.

The protein belongs to the OMP decarboxylase family.

It catalyses the reaction orotidine 5'-phosphate + H(+) = UMP + CO2. The protein operates within pyrimidine metabolism; UMP biosynthesis via de novo pathway; UMP from orotate: step 2/2. The chain is Orotidine 5'-phosphate decarboxylase (pyrG) from Penicillium nalgiovense.